The sequence spans 580 residues: Mucolipin-1 (580 aa).

Residues 1–38 (MATPAGRRASETERLLTPNPGYGTQVGTSPAPTTPTEE) form a disordered region. The Cytoplasmic segment spans residues 1-65 (MATPAGRRAS…FRAKGRKPCK (65 aa)). At Ser10 the chain carries Phosphoserine. Residues 11–16 (ETERLL) carry the Dileucine motif; mediates targeting to lysosomes motif. Residues 42–62 (RRRLKYFFMSPCDKFRAKGRK) are interaction with phosphoinositides. Residues 66–86 (LMLQVVKILVVTVQLILFGLS) traverse the membrane as a helical segment. The Extracellular segment spans residues 87-298 (NQLVVTFREE…VSRHGDNSFR (212 aa)). Positions 107–121 (LGYSDGSDDTFAAYT) are extracellular/lumenal pore loop. A disulfide bridge connects residues Cys166 and Cys192. 2 N-linked (GlcNAc...) asparagine glycosylation sites follow: Asn220 and Asn230. The cysteines at positions 253 and 284 are disulfide-linked. Residues 299–321 (LLFDVVVILTCSLSFLLCARSLL) traverse the membrane as a helical segment. Residues 322-350 (RGFLLQNEFVVFMWRRRGREISLWERLEF) are Cytoplasmic-facing. The chain crosses the membrane as a helical span at residues 351-371 (VNGWYILLVTSDVLTISGTVM). Residues 372–382 (KIGIEAKNLAS) lie on the Extracellular side of the membrane. A helical membrane pass occupies residues 383 to 405 (YDVCSILLGTSTLLVWVGVIRYL). At 406-427 (TFFHKYNILIATLRVALPSVMR) the chain is on the cytoplasmic side. Residues 428 to 448 (FCCCVAVIYLGYCFCGWIVLG) traverse the membrane as a helical segment. At 449-456 (PYHVKFRS) the chain is on the extracellular side. Residues 457–477 (LSMVSECLFSLINGDDMFVTF) constitute an intramembrane region (pore-forming). Residues 469–474 (NGDDMF) carry the Selectivity filter motif. At 478–491 (AAMQAQQGHSSLVW) the chain is on the extracellular side. A helical transmembrane segment spans residues 492 to 513 (LFSQLYLYSFISLFIYMVLSLF). Residues 514-580 (IALITGAYDT…SPEDHSLLVN (67 aa)) are Cytoplasmic-facing. Ser557 is subject to Phosphoserine. Ser559 bears the Phosphoserine; by PAK mark. Residues 565-567 (CCC) are required for palmitoylation and association with membranes. The short motif at 573 to 578 (EDHSLL) is the Dileucine internalization motif; mediates AP2 complex-dependent internalization element.

The protein belongs to the transient receptor (TC 1.A.4) family. Polycystin subfamily. MCOLN1 sub-subfamily. Homotetramer. Homooligomer. Can heterooligomerize with MCOLN2 or MCOLN3; heteromeric assemblies have different channel properties as compared to the respective homooligomers and may be tissue-specific. Interacts with PDCD6. Interacts with TMEM163. Interacts with LAPTM4B. Palmitoylated; involved in association with membranes. Post-translationally, phosphorylation by PKA inhibits channel activity. Dephosphorylation increases activity. In terms of processing, proteolytically cleaved probably involving multiple lysosomal proteases including cathepsin B; inhibits lysosomal channel activity. In terms of tissue distribution, widely expressed, with the highest expression in brain, liver and kidney.

The protein resides in the late endosome membrane. It is found in the lysosome membrane. Its subcellular location is the cytoplasmic vesicle membrane. It localises to the cell projection. The protein localises to the phagocytic cup. The protein resides in the cytoplasmic vesicle. It is found in the phagosome membrane. Its subcellular location is the cell membrane. The enzyme catalyses Ca(2+)(in) = Ca(2+)(out). It catalyses the reaction Fe(2+)(in) = Fe(2+)(out). The catalysed reaction is Mg(2+)(in) = Mg(2+)(out). It carries out the reaction K(+)(in) = K(+)(out). The enzyme catalyses Na(+)(in) = Na(+)(out). Its activity is regulated as follows. Channel activity is controlled by multiple regulatory mechanisms in different subcellular compartments. Lower pH by itself has an inhibitory effect on channel conductance. Channel function is transiently modulated by changes in Ca(2+) in a pH-dependent manner; pH changes modify the aggregation state of unitary channels; a negative cooperativity between extracellular/lumenal Ca(2+) and H(+) is suggested. Fe(2+) channel activity is potentiated by low pH. Regulated by phosphoinositides in a compartment-specific manner: in lysosomes activated by PtdIns(3,5)P2 (Phosphatidylinositol 3,5-bisphosphate) and at the plasma membrane inhibited by PtdIns(4,5)P2 (Phosphatidylinositol 4,5-bisphosphate). Its function is as follows. Nonselective cation channel probably playing a role in the regulation of membrane trafficking events and of metal homeostasis. Acts as a Ca(2+)-permeable cation channel with inwardly rectifying activity. Proposed to play a major role in Ca(2+) release from late endosome and lysosome vesicles to the cytoplasm, which is important for many lysosome-dependent cellular events, including the fusion and trafficking of these organelles, exocytosis and autophagy. Required for efficient uptake of large particles in macrophages in which Ca(2+) release from the lysosomes triggers lysosomal exocytosis. May also play a role in phagosome-lysosome fusion. Involved in lactosylceramide trafficking indicative for a role in the regulation of late endocytic membrane fusion/fission events. By mediating lysosomal Ca(2+) release is involved in regulation of mTORC1 signaling and in mTOR/TFEB-dependent lysosomal adaptation to environmental cues such as nutrient levels. Seems to act as lysosomal active oxygen species (ROS) sensor involved in ROS-induced TFEB activation and autophagy. Also functions as a Fe(2+) permeable channel in late endosomes and lysosomes. Also permeable to Mg(2+), Na(+). K(+) and Cs(+). Proposed to play a role in zinc homeostasis probably implicating its association with TMEM163. In adaptive immunity, TRPML2 and TRPML1 may play redundant roles in the function of the specialized lysosomes of B cells. May contribute to cellular lipase activity within the late endosomal pathway or at the cell surface which may be involved in processes of membrane reshaping and vesiculation, especially the growth of tubular structures. However, it is not known, whether it conveys the enzymatic activity directly, or merely facilitates the activity of an associated phospholipase. This Mus musculus (Mouse) protein is Mucolipin-1.